The sequence spans 558 residues: Serine/threonine-protein phosphatase 2B catalytic subunit (558 aa).

Aspartate 128, histidine 130, and aspartate 156 together coordinate Fe cation. Residues aspartate 156 and asparagine 188 each contribute to the Zn(2+) site. Residue histidine 189 is the Proton donor of the active site. Zn(2+) is bound by residues histidine 237 and histidine 319. Disordered stretches follow at residues 415–439 (LRED…NQDP) and 534–558 (ALER…LSTS). The span at 420 to 435 (ATTSPGSASPALPSAA) shows a compositional bias: low complexity. Residues 534-548 (ALERATREADNDKKL) show a composition bias toward basic and acidic residues. The span at 549–558 (QTLSRRLSTS) shows a compositional bias: polar residues.

This sequence belongs to the PPP phosphatase family. PP-2B subfamily. Composed of two components (A and B), the A component is the catalytic subunit and the B component confers calcium sensitivity. Fe(3+) serves as cofactor. It depends on Zn(2+) as a cofactor.

It carries out the reaction O-phospho-L-seryl-[protein] + H2O = L-seryl-[protein] + phosphate. The catalysed reaction is O-phospho-L-threonyl-[protein] + H2O = L-threonyl-[protein] + phosphate. In terms of biological role, calcium-dependent, calmodulin-stimulated protein phosphatase. This subunit may have a role in the calmodulin activation of calcineurin. The sequence is that of Serine/threonine-protein phosphatase 2B catalytic subunit (cna-1) from Neurospora crassa (strain ATCC 24698 / 74-OR23-1A / CBS 708.71 / DSM 1257 / FGSC 987).